We begin with the raw amino-acid sequence, 289 residues long: Formamidopyrimidine-DNA glycosylase (289 aa).

The Schiff-base intermediate with DNA role is filled by Pro2. The Proton donor role is filled by Glu3. Catalysis depends on Lys60, which acts as the Proton donor; for beta-elimination activity. Residues His94, Arg126, and Arg167 each coordinate DNA. The FPG-type zinc-finger motif lies at 252–287; sequence QVYGKPAGTPCPRCGTGLARIRIAGRSSVFCPRCQP. The active-site Proton donor; for delta-elimination activity is the Arg277.

This sequence belongs to the FPG family. As to quaternary structure, monomer. It depends on Zn(2+) as a cofactor.

The catalysed reaction is Hydrolysis of DNA containing ring-opened 7-methylguanine residues, releasing 2,6-diamino-4-hydroxy-5-(N-methyl)formamidopyrimidine.. It carries out the reaction 2'-deoxyribonucleotide-(2'-deoxyribose 5'-phosphate)-2'-deoxyribonucleotide-DNA = a 3'-end 2'-deoxyribonucleotide-(2,3-dehydro-2,3-deoxyribose 5'-phosphate)-DNA + a 5'-end 5'-phospho-2'-deoxyribonucleoside-DNA + H(+). In terms of biological role, involved in base excision repair of DNA damaged by oxidation or by mutagenic agents. Acts as a DNA glycosylase that recognizes and removes damaged bases. Has a preference for oxidized purines, such as 7,8-dihydro-8-oxoguanine (8-oxoG). Has AP (apurinic/apyrimidinic) lyase activity and introduces nicks in the DNA strand. Cleaves the DNA backbone by beta-delta elimination to generate a single-strand break at the site of the removed base with both 3'- and 5'-phosphates. This chain is Formamidopyrimidine-DNA glycosylase, found in Thermomicrobium roseum (strain ATCC 27502 / DSM 5159 / P-2).